Here is a 508-residue protein sequence, read N- to C-terminus: Catalase (508 aa).

Residues H63 and N136 contribute to the active site. Y346 serves as a coordination point for heme.

It belongs to the catalase family. As to quaternary structure, homohexamer. The cofactor is heme.

The protein localises to the cytoplasm. It catalyses the reaction 2 H2O2 = O2 + 2 H2O. Decomposes hydrogen peroxide into water and oxygen; serves to protect cells from the toxic effects of hydrogen peroxide. The polypeptide is Catalase (katA) (Haemophilus influenzae (strain ATCC 51907 / DSM 11121 / KW20 / Rd)).